The chain runs to 57 residues: UPF0057 membrane protein T23F2.5 (57 aa).

Transmembrane regions (helical) follow at residues 3–23 and 36–56; these read LTCTDIPKFLCALLLPPIGVW and ILLTILGYIPGIIHACYVILA.

It belongs to the UPF0057 (PMP3) family.

The protein resides in the membrane. This is UPF0057 membrane protein T23F2.5 from Caenorhabditis elegans.